A 509-amino-acid chain; its full sequence is 3-octaprenyl-4-hydroxybenzoate carboxy-lyase (509 aa).

N179 serves as a coordination point for Mn(2+). Prenylated FMN-binding positions include 182 to 184, 196 to 198, and 201 to 202; these read IYR, RWL, and RG. E245 contacts Mn(2+). Residue D304 is the Proton donor of the active site.

Belongs to the UbiD family. Homohexamer. Prenylated FMN serves as cofactor. The cofactor is Mn(2+).

The protein resides in the cell membrane. The enzyme catalyses a 4-hydroxy-3-(all-trans-polyprenyl)benzoate + H(+) = a 2-(all-trans-polyprenyl)phenol + CO2. It participates in cofactor biosynthesis; ubiquinone biosynthesis. Its function is as follows. Catalyzes the decarboxylation of 3-octaprenyl-4-hydroxy benzoate to 2-octaprenylphenol, an intermediate step in ubiquinone biosynthesis. The chain is 3-octaprenyl-4-hydroxybenzoate carboxy-lyase from Cupriavidus pinatubonensis (strain JMP 134 / LMG 1197) (Cupriavidus necator (strain JMP 134)).